Consider the following 193-residue polypeptide: Probable GTP-binding protein EngB (193 aa).

The 170-residue stretch at 24–193 (NIPEIALAGR…ELKAALAELL (170 aa)) folds into the EngB-type G domain. Residues 32 to 39 (GRSNVGKS), 59 to 63 (GKTRT), 77 to 80 (DLPG), 144 to 147 (TKAD), and 174 to 176 (FSA) contribute to the GTP site. Residues Ser-39 and Thr-61 each contribute to the Mg(2+) site.

This sequence belongs to the TRAFAC class TrmE-Era-EngA-EngB-Septin-like GTPase superfamily. EngB GTPase family. It depends on Mg(2+) as a cofactor.

Functionally, necessary for normal cell division and for the maintenance of normal septation. The sequence is that of Probable GTP-binding protein EngB from Syntrophomonas wolfei subsp. wolfei (strain DSM 2245B / Goettingen).